We begin with the raw amino-acid sequence, 439 residues long: Protein translocase subunit SecY (439 aa).

10 helical membrane passes run 19–39, 68–88, 116–136, 151–171, 176–196, 216–236, 269–289, 312–332, 373–393, and 396–416; these read ILFT…TVPG, YSLF…VQLL, YITL…FQAM, LMIG…GEQI, FGSG…PSAV, WLFV…TTFV, VIPV…LQFL, WTGM…YSFV, VGAL…NVWG, and KIVA…IQAV.

It belongs to the SecY/SEC61-alpha family. Component of the Sec protein translocase complex. Heterotrimer consisting of SecY, SecE and SecG subunits. The heterotrimers can form oligomers, although 1 heterotrimer is thought to be able to translocate proteins. Interacts with the ribosome. Interacts with SecDF, and other proteins may be involved. Interacts with SecA.

The protein resides in the cell membrane. Its function is as follows. The central subunit of the protein translocation channel SecYEG. Consists of two halves formed by TMs 1-5 and 6-10. These two domains form a lateral gate at the front which open onto the bilayer between TMs 2 and 7, and are clamped together by SecE at the back. The channel is closed by both a pore ring composed of hydrophobic SecY resides and a short helix (helix 2A) on the extracellular side of the membrane which forms a plug. The plug probably moves laterally to allow the channel to open. The ring and the pore may move independently. This Lactococcus lactis subsp. lactis (strain IL1403) (Streptococcus lactis) protein is Protein translocase subunit SecY.